Reading from the N-terminus, the 304-residue chain is E3 ubiquitin-protein ligase BOI (304 aa).

Residues 178–214 (LQERVKSLYVENQIWRDIAQTNEANANTLRTNLDQVL) form a WRD domain region. Residues 197–220 (QTNEANANTLRTNLDQVLAQLETF) are a coiled coil. The RING-type zinc-finger motif lies at 254–291 (CKRCGEREASVLVLPCRHLCLCTVCGGSALLRTCPVCD).

In terms of assembly, interacts with MYB108/BOS1 and the DELLA proteins GAI, RGA, RGL1, RGL2 and RGL3. Expressed in leaves, siliques, roots, flowering tissues and stigma tips.

The protein resides in the nucleus. The catalysed reaction is S-ubiquitinyl-[E2 ubiquitin-conjugating enzyme]-L-cysteine + [acceptor protein]-L-lysine = [E2 ubiquitin-conjugating enzyme]-L-cysteine + N(6)-ubiquitinyl-[acceptor protein]-L-lysine.. Its pathway is protein degradation; proteasomal ubiquitin-dependent pathway. In terms of biological role, E3 ubiquitin-protein ligase involved in the regulation of pathogen and abiotic stress responses by facilitating degradation of MYB108/BOI. Attenuates cell death by preventing caspase activation. Has no effect on the stability of the DELLA proteins. Not regulated by MYB108/BOI. The sequence is that of E3 ubiquitin-protein ligase BOI (BOI) from Arabidopsis thaliana (Mouse-ear cress).